A 105-amino-acid polypeptide reads, in one-letter code: Endogenous retrovirus group K member 6 Rec protein (105 aa).

The tract at residues 1–49 (MNPSEMQRKAPPRRRRHRNRAPLTHKMNKMVTSEEQMKLPSTKKAEPPT) is disordered. Residues 10 to 20 (APPRRRRHRNR) are compositionally biased toward basic residues. The Nuclear localization signal motif lies at 13-20 (RRRRHRNR). The Nuclear export signal signature appears at 50–59 (WAQLKKLTQL).

In terms of assembly, forms homodimers, homotrimers, and homotetramers via a C-terminal domain. Associates with XPO1 and with ZNF145. Expressed at higher level in placenta, expressed at lower level in several organs and cell lines.

The protein localises to the cytoplasm. It is found in the nucleus. The protein resides in the nucleolus. Retroviral replication requires the nuclear export and translation of unspliced, singly-spliced and multiply-spliced derivatives of the initial genomic transcript. Rec interacts with a highly structured RNA element (RcRE) present in the viral 3'LTR and recruits the cellular nuclear export machinery. This permits export to the cytoplasm of unspliced genomic or incompletely spliced subgenomic viral transcripts. The protein is Endogenous retrovirus group K member 6 Rec protein (ERVK-6) of Homo sapiens (Human).